The primary structure comprises 452 residues: 2-succinylbenzoate--CoA ligase (452 aa).

It belongs to the ATP-dependent AMP-binding enzyme family. MenE subfamily.

The catalysed reaction is 2-succinylbenzoate + ATP + CoA = 2-succinylbenzoyl-CoA + AMP + diphosphate. It participates in quinol/quinone metabolism; 1,4-dihydroxy-2-naphthoate biosynthesis; 1,4-dihydroxy-2-naphthoate from chorismate: step 5/7. Its pathway is quinol/quinone metabolism; menaquinone biosynthesis. Functionally, converts 2-succinylbenzoate (OSB) to 2-succinylbenzoyl-CoA (OSB-CoA). The polypeptide is 2-succinylbenzoate--CoA ligase (Haemophilus influenzae (strain ATCC 51907 / DSM 11121 / KW20 / Rd)).